The sequence spans 30 residues: Superoxide dismutase [Cu-Zn] 1 (30 aa).

The protein belongs to the Cu-Zn superoxide dismutase family. Requires Cu cation as cofactor. Zn(2+) is required as a cofactor. In terms of tissue distribution, expressed in fruits, leaves and pollen grains.

The protein localises to the cytoplasm. Its subcellular location is the endoplasmic reticulum. It catalyses the reaction 2 superoxide + 2 H(+) = H2O2 + O2. Inhibited by KCN and H(2)O(2). Functionally, destroys radicals which are normally produced within the cells and which are toxic to biological systems. Probably involved in the protection against oxidative stress during pollen development. The sequence is that of Superoxide dismutase [Cu-Zn] 1 from Olea europaea (Common olive).